The following is a 189-amino-acid chain: Peptidyl-tRNA hydrolase (189 aa).

Tyr-14 provides a ligand contact to tRNA. His-19 (proton acceptor) is an active-site residue. TRNA is bound by residues Tyr-64, Asn-66, and Asn-112.

Belongs to the PTH family. In terms of assembly, monomer.

It is found in the cytoplasm. It carries out the reaction an N-acyl-L-alpha-aminoacyl-tRNA + H2O = an N-acyl-L-amino acid + a tRNA + H(+). In terms of biological role, hydrolyzes ribosome-free peptidyl-tRNAs (with 1 or more amino acids incorporated), which drop off the ribosome during protein synthesis, or as a result of ribosome stalling. Catalyzes the release of premature peptidyl moieties from peptidyl-tRNA molecules trapped in stalled 50S ribosomal subunits, and thus maintains levels of free tRNAs and 50S ribosomes. This Dehalococcoides mccartyi (strain CBDB1) protein is Peptidyl-tRNA hydrolase.